The chain runs to 32 residues: Basic phospholipase A2 (32 aa).

Residues Y26, G28, and G30 each coordinate Ca(2+).

Belongs to the phospholipase A2 family. Group II subfamily. Ca(2+) serves as cofactor. As to expression, expressed by the venom gland.

Its subcellular location is the secreted. The catalysed reaction is a 1,2-diacyl-sn-glycero-3-phosphocholine + H2O = a 1-acyl-sn-glycero-3-phosphocholine + a fatty acid + H(+). Functionally, snake venom phospholipase A2 (PLA2) that inhibits neuromuscular transmission by blocking acetylcholine release from the nerve termini. PLA2 catalyzes the calcium-dependent hydrolysis of the 2-acyl groups in 3-sn-phosphoglycerides. This Gloydius halys (Chinese water mocassin) protein is Basic phospholipase A2.